The sequence spans 773 residues: Photosystem I P700 chlorophyll a apoprotein A1 (773 aa).

A disordered region spans residues 1–27 (MTISPPERGEKAKGAAPTPYDQPVDRD). 8 helical membrane passes run 80 to 103 (IFSAHFGHLAVVFIWMSAAFFHGA), 166 to 189 (LMALAIGGVIMAALMLHGGIYHYH), 205 to 229 (LQHHQIALIGLGSIAWAGHLIHIGA), 315 to 333 (ISHHHLAFGVFAIFGGHMW), 375 to 398 (WHGQLSINLAMVGSASIVVAHHMY), 414 to 440 (LGLFTHHMWIGGLFICGAAAHAGIAMI), 462 to 484 (AIISHLNWVCMWLGFHSFGLYIH), and 564 to 582 (LMIHHVHAFTIHVTLLILL). [4Fe-4S] cluster contacts are provided by cysteine 606 and cysteine 615. The next 2 membrane-spanning stretches (helical) occupy residues 622–643 (HVFLGLFWMYNSLSVVIFHFSW) and 687–709 (ISMYGLMFLGAHFVWAFSLMFLF). Histidine 698 provides a ligand contact to divinylchlorophyll a'. Positions 706 and 714 each coordinate divinyl chlorophyll a. Residue tryptophan 715 participates in phylloquinone binding. The chain crosses the membrane as a helical span at residues 747 to 767 (AVGVAHFLLGGIATTWAFFHA).

This sequence belongs to the PsaA/PsaB family. The PsaA/B heterodimer binds the P700 divinyl chlorophyll special pair and subsequent electron acceptors. PSI consists of a core antenna complex that captures photons, and an electron transfer chain that converts photonic excitation into a charge separation. The cyanobacterial PSI reaction center is composed of one copy each of PsaA,B,C,D,E,F,I,J,K,L,M and X, and forms trimeric complexes. Requires PSI electron transfer chain: 5 divinyl chlorophyll a, 1 divinyl chlorophyll a', 2 phylloquinones and 3 4Fe-4S clusters. PSI core antenna: 90 divinyl chlorophyll a, 22 carotenoids, 3 phospholipids and 1 galactolipid. P700 is a divinyl chlorophyll a/divinyl chlorophyll a' dimer, A0 is one or more divinylchlorophyll a, A1 is one or both phylloquinones and FX is a shared 4Fe-4S iron-sulfur center. as cofactor.

The protein localises to the cellular thylakoid membrane. The enzyme catalyses reduced [plastocyanin] + hnu + oxidized [2Fe-2S]-[ferredoxin] = oxidized [plastocyanin] + reduced [2Fe-2S]-[ferredoxin]. In terms of biological role, psaA and PsaB bind P700, the primary electron donor of photosystem I (PSI), as well as the electron acceptors A0, A1 and FX. PSI is a plastocyanin/cytochrome c6-ferredoxin oxidoreductase, converting photonic excitation into a charge separation, which transfers an electron from the donor P700 chlorophyll pair to the spectroscopically characterized acceptors A0, A1, FX, FA and FB in turn. Oxidized P700 is reduced on the lumenal side of the thylakoid membrane by plastocyanin or cytochrome c6. This Prochlorococcus marinus (strain SARG / CCMP1375 / SS120) protein is Photosystem I P700 chlorophyll a apoprotein A1.